Reading from the N-terminus, the 171-residue chain is NADH-quinone oxidoreductase subunit B 1 (171 aa).

Positions 44, 45, 110, and 139 each coordinate [4Fe-4S] cluster.

It belongs to the complex I 20 kDa subunit family. In terms of assembly, NDH-1 is composed of 14 different subunits. Subunits NuoB, C, D, E, F, and G constitute the peripheral sector of the complex. The cofactor is [4Fe-4S] cluster.

The protein resides in the cell inner membrane. The enzyme catalyses a quinone + NADH + 5 H(+)(in) = a quinol + NAD(+) + 4 H(+)(out). In terms of biological role, NDH-1 shuttles electrons from NADH, via FMN and iron-sulfur (Fe-S) centers, to quinones in the respiratory chain. The immediate electron acceptor for the enzyme in this species is believed to be ubiquinone. Couples the redox reaction to proton translocation (for every two electrons transferred, four hydrogen ions are translocated across the cytoplasmic membrane), and thus conserves the redox energy in a proton gradient. This chain is NADH-quinone oxidoreductase subunit B 1, found in Opitutus terrae (strain DSM 11246 / JCM 15787 / PB90-1).